The following is a 594-amino-acid chain: MSGRIEYISGPVVKAELPGARLYELVFVGELKLFGEVVRIQGDKAFIQVYEDTTGLKPGEPVERTGEPLSAWLGPTILGRIYDGVQRPLKDIESISKSPFIARGIGYDKAPPLDLNAVFDFKPAVKPGDFVQPGDVLGSVKETELITHYITYPPLPENAPGEVEWVADGKYKVDDVIARIKTKRGVVEVKMWHKWPVRRPRPFREKLPPVEPLITGVRVIDTMFPIAKGGTAAVPGPFGSGKTVMIRTLSMFAQSRIIIPVLCGERGNEAADALQGLLKLKDPSTGRPLLERTTIIVNTSNMPVAAREASVYMGTTLGEYFRDQGYDVLVLADSTSRWAEAMREVALRIGEMPSEEGYPAYLPTRLAEFYERAGRVVLIGSGERVGSLTIAASVSPPGGDFTEPVTSNTLRFIGAFWPLSPRLAYSRHYPAIDWLMAFSRYVDTVEVWWSKNVSPEWRRIRDVLQSILVKEAELQEIVRILGTEALSEYEKHILNVAFMIREGFLKQDAYNPVDTPTSPIKQFLLMKAIYVYYEEGLKAIEAGVPASILRELDTVKRLPRLRMELTNDVAKEELTKFIEALTSEIRSTTAGRRP.

An ATP-binding site is contributed by 236 to 243 (GPFGSGKT).

Belongs to the ATPase alpha/beta chains family. Has multiple subunits with at least A(3), B(3), C, D, E, F, H, I and proteolipid K(x).

It localises to the cell membrane. It carries out the reaction ATP + H2O + 4 H(+)(in) = ADP + phosphate + 5 H(+)(out). Component of the A-type ATP synthase that produces ATP from ADP in the presence of a proton gradient across the membrane. The A chain is the catalytic subunit. This chain is A-type ATP synthase subunit A, found in Pyrobaculum calidifontis (strain DSM 21063 / JCM 11548 / VA1).